The primary structure comprises 251 residues: Probable transcriptional regulatory protein cu0933 (251 aa).

The tract at residues 56–79 is disordered; the sequence is AKKSSVPNDNIERARKRGSGEEAG.

The protein belongs to the TACO1 family.

Its subcellular location is the cytoplasm. The protein is Probable transcriptional regulatory protein cu0933 of Corynebacterium urealyticum (strain ATCC 43042 / DSM 7109).